The sequence spans 463 residues: 23S rRNA (uracil(1939)-C(5))-methyltransferase RlmD (463 aa).

Positions 8-76 (RSKSATVYTF…KRFEEGELIE (69 aa)) constitute a TRAM domain. Residues cysteine 90, cysteine 96, cysteine 99, and cysteine 178 each coordinate [4Fe-4S] cluster. 6 residues coordinate S-adenosyl-L-methionine: glutamine 288, phenylalanine 317, asparagine 322, glutamate 341, aspartate 368, and aspartate 389. Catalysis depends on cysteine 415, which acts as the Nucleophile.

This sequence belongs to the class I-like SAM-binding methyltransferase superfamily. RNA M5U methyltransferase family. RlmD subfamily.

The catalysed reaction is uridine(1939) in 23S rRNA + S-adenosyl-L-methionine = 5-methyluridine(1939) in 23S rRNA + S-adenosyl-L-homocysteine + H(+). Its function is as follows. Catalyzes the formation of 5-methyl-uridine at position 1939 (m5U1939) in 23S rRNA. This is 23S rRNA (uracil(1939)-C(5))-methyltransferase RlmD from Acinetobacter baylyi (strain ATCC 33305 / BD413 / ADP1).